A 504-amino-acid chain; its full sequence is Cytochrome P450 monooxygenase gliF (504 aa).

The helical transmembrane segment at 13–31 (AVAVSFGVGLLYWVYRLLL) threads the bilayer. N-linked (GlcNAc...) asparagine glycosylation is found at Asn-197 and Asn-299. Residue Cys-449 participates in heme binding.

Belongs to the cytochrome P450 family. Heme is required as a cofactor.

It is found in the membrane. It participates in mycotoxin biosynthesis. Functionally, cytochrome P450 monooxygenase; part of the gene cluster that mediates the biosynthesis of gliotoxin, a member of the epipolythiodioxopiperazine (ETP) class of toxins characterized by a disulfide bridged cyclic dipeptide. The first step in gliotoxin biosynthesis is the condensation of serine and phenylalanine to form the cyclo-L-phenylalanyl-L-serine diketopiperazine (DKP) by the NRPS gliP. GliP is also able to produce the DKP cyclo-L-tryptophanyl-L-serine, suggesting that the substrate specificity of the first adenylation (A) domain in gliP is sufficiently relaxed to accommodate both L-Phe and L-Trp. The cytochrome P450 monooxygenase gliC has been shown to catalyze the subsequent hydroxylation of the alpha-carbon of L-Phe in cyclo-L-phenylalanyl-L-serine whereas the second cytochrome P450 enzyme, gliF, is presumably involved in the modification of the DKP side chain. The glutathione S-transferase (GST) gliG then forms a bis-glutathionylated biosynthetic intermediate which is responsible for the sulfurization of gliotoxin. This bis-glutathionylated intermediate is subsequently processed by the gamma-glutamyl cyclotransferase gliK to remove both gamma-glutamyl moieties. Subsequent processing via gliI yields a biosynthetic intermediate, which is N-methylated via the N-methyltransferase gliN, before the gliotoxin oxidoreductase gliT-mediated disulfide bridge closure. GliN-mediated amide methylation confers stability to ETP, damping the spontaneous formation of tri- and tetrasulfides. Intracellular dithiol gliotoxin oxidized by gliT is subsequently effluxed by gliA. Gliotoxin contributes to pathogenesis during invasive aspergillosis. In macrophages and neutrophils, gliotoxin showed inhibition of various different cell functions including cytokine production, antigen presentation, phagocytosis, and production of reactive oxygen species. The protein is Cytochrome P450 monooxygenase gliF of Aspergillus fumigatus (strain ATCC MYA-4609 / CBS 101355 / FGSC A1100 / Af293) (Neosartorya fumigata).